A 1567-amino-acid chain; its full sequence is Transmembrane protein 131 homolog (1567 aa).

The first 32 residues, 1–32, serve as a signal peptide directing secretion; the sequence is MPTQVQMRPLLRIFAEPILLILIFLFTLGAKG. The Lumenal segment spans residues 33–1049; the sequence is EKVLQETFLG…RPGWESSLKN (1017 aa). The interval 55-228 is papD-L domain; that stretch reads RLVPSRLDFG…TLKPVIRISF (174 aa). N84, N114, N168, N235, N316, N317, N342, N372, N409, N462, N563, N890, and N1013 each carry an N-linked (GlcNAc...) asparagine glycan. A helical membrane pass occupies residues 1050 to 1070; it reads AALVVLLASFGLVLVAAVFDA. The Cytoplasmic portion of the chain corresponds to 1071-1567; it reads KAIMVQQNAY…SQRNNHNHMN (497 aa). Residues 1096–1130 are a coiled coil; sequence RNIVKLQAEEAAAKAESVQQQQKVKNGQLKELRKR. Disordered stretches follow at residues 1112–1337, 1364–1386, and 1502–1567; these read SVQQ…SPDA, PTDNGFDWNHATSSSDLGPIGDN, and PGLE…NHMN. 2 stretches are compositionally biased toward low complexity: residues 1132–1150 and 1166–1183; these read VVNSTNSKSKSKSSWSPWS and KTVVSTPVTPPAASAPAA. Phosphoserine is present on residues S1201 and S1258. Residues 1247 to 1259 are compositionally biased toward polar residues; sequence AKSSPPQQENISP. Over residues 1284-1298 the composition is skewed to basic and acidic residues; it reads PGRERERERRSKDQK. Residues 1319-1331 are compositionally biased toward polar residues; the sequence is KLNFGQTTNSTSP. Composition is skewed to polar residues over residues 1507-1519 and 1536-1561; these read SARQTHNLAQEQV and LPTQYDPFTSPSSIWSDTWRQSSQRN.

The protein belongs to the TMEM131 family. In terms of assembly, may interact (via PapD-L domain) with collagen proteins (via C-terminus); the interaction is direct and is involved in assembly and TRAPPIII ER-to-Golgi transport complex-dependent secretion of collagen.

It is found in the membrane. In terms of biological role, collagen binding transmembrane protein involved in collagen secretion, probably by recruiting the ER-to-Golgi transport complex TRAPPIII. The chain is Transmembrane protein 131 homolog from Drosophila melanogaster (Fruit fly).